The primary structure comprises 404 residues: Subtilisin-like protease 3 (404 aa).

The first 20 residues, 1–20 (MLFSKSLVALVACFLPLIVS), serve as a signal peptide directing secretion. Positions 21 to 114 (ATELKLRNAA…VDKDVKVSAY (94 aa)) are excised as a propeptide. Residues 38 to 112 (SYIVVYKDID…AYVDKDVKVS (75 aa)) form the Inhibitor I9 domain. In terms of domain architecture, Peptidase S8 spans 123–404 (PWGLDRISHR…DNLAYNDDGY (282 aa)). Asparagine 133 is a glycosylation site (N-linked (GlcNAc...) asparagine). Residues aspartate 158 and histidine 190 each act as charge relay system in the active site. N-linked (GlcNAc...) asparagine glycosylation is found at asparagine 243, asparagine 251, asparagine 286, asparagine 307, and asparagine 340. Residue serine 347 is the Charge relay system of the active site. A glycan (N-linked (GlcNAc...) asparagine) is linked at asparagine 366.

It belongs to the peptidase S8 family.

The protein localises to the secreted. Secreted subtilisin-like serine endopeptidase. Mediates the degradation of collagen, the major structural protein in the mammalian host. Degrades the nonhelical regions of collagen that function in the cross-linking of the helical components. May function as virulence factor involved in epidermal wing necrosis observed in white nose syndrome (WNS) in bats. The chain is Subtilisin-like protease 3 from Pseudogymnoascus destructans (strain ATCC MYA-4855 / 20631-21) (Bat white-nose syndrome fungus).